The following is a 364-amino-acid chain: Paraneoplastic antigen Ma2 (364 aa).

Ala-2 bears the N-acetylalanine mark. The span at 335–351 shows a compositional bias: acidic residues; the sequence is EEEEASFENESIEEPEE. Positions 335–364 are disordered; that stretch reads EEEEASFENESIEEPEERDGYGRWNHEGDD. A compositionally biased stretch (basic and acidic residues) spans 352 to 364; that stretch reads RDGYGRWNHEGDD.

The protein belongs to the PNMA family. As to expression, brain-specific. In some cancer patients, specifically expressed by testicular tumor cells.

It is found in the nucleus. Its subcellular location is the nucleolus. The chain is Paraneoplastic antigen Ma2 (PNMA2) from Homo sapiens (Human).